We begin with the raw amino-acid sequence, 491 residues long: 3-octaprenyl-4-hydroxybenzoate carboxy-lyase (491 aa).

Mn(2+) is bound at residue Asn-172. Prenylated FMN is bound by residues 175–177 (IYR), 189–191 (RWL), and 194–195 (RG). Glu-238 lines the Mn(2+) pocket. Asp-287 (proton donor) is an active-site residue.

Belongs to the UbiD family. As to quaternary structure, homohexamer. It depends on prenylated FMN as a cofactor. The cofactor is Mn(2+).

Its subcellular location is the cell membrane. It catalyses the reaction a 4-hydroxy-3-(all-trans-polyprenyl)benzoate + H(+) = a 2-(all-trans-polyprenyl)phenol + CO2. It functions in the pathway cofactor biosynthesis; ubiquinone biosynthesis. Its function is as follows. Catalyzes the decarboxylation of 3-octaprenyl-4-hydroxy benzoate to 2-octaprenylphenol, an intermediate step in ubiquinone biosynthesis. The chain is 3-octaprenyl-4-hydroxybenzoate carboxy-lyase from Histophilus somni (strain 2336) (Haemophilus somnus).